Consider the following 319-residue polypeptide: tRNA-cytidine(32) 2-sulfurtransferase (319 aa).

Residues 49–54 carry the PP-loop motif motif; that stretch reads SGGKDS. [4Fe-4S] cluster-binding residues include Cys124, Cys127, and Cys215.

This sequence belongs to the TtcA family. Homodimer. Mg(2+) serves as cofactor. It depends on [4Fe-4S] cluster as a cofactor.

Its subcellular location is the cytoplasm. The enzyme catalyses cytidine(32) in tRNA + S-sulfanyl-L-cysteinyl-[cysteine desulfurase] + AH2 + ATP = 2-thiocytidine(32) in tRNA + L-cysteinyl-[cysteine desulfurase] + A + AMP + diphosphate + H(+). It functions in the pathway tRNA modification. Functionally, catalyzes the ATP-dependent 2-thiolation of cytidine in position 32 of tRNA, to form 2-thiocytidine (s(2)C32). The sulfur atoms are provided by the cysteine/cysteine desulfurase (IscS) system. This chain is tRNA-cytidine(32) 2-sulfurtransferase, found in Shewanella amazonensis (strain ATCC BAA-1098 / SB2B).